The primary structure comprises 51 residues: Ribosome biogenesis protein Nop10 (51 aa).

The protein belongs to the NOP10 family.

Functionally, involved in ribosome biogenesis; more specifically in 18S rRNA pseudouridylation and in cleavage of pre-rRNA. This is Ribosome biogenesis protein Nop10 from Methanosarcina barkeri (strain Fusaro / DSM 804).